A 388-amino-acid polypeptide reads, in one-letter code: uncharacterized protein (388 aa).

Belongs to the glycosyltransferase 28 family.

This is an uncharacterized protein from Methanosarcina acetivorans (strain ATCC 35395 / DSM 2834 / JCM 12185 / C2A).